The primary structure comprises 398 residues: Isopenicillin N epimerase (398 aa).

N6-(pyridoxal phosphate)lysine is present on lysine 217.

The protein belongs to the class-V pyridoxal-phosphate-dependent aminotransferase family. Requires pyridoxal 5'-phosphate as cofactor.

It carries out the reaction isopenicillin N = penicillin N. It functions in the pathway antibiotic biosynthesis; cephalosporin C biosynthesis. In terms of biological role, catalyzes the reversible isomerization between isopenicillin N and penicillin N. This chain is Isopenicillin N epimerase (cefD), found in Streptomyces clavuligerus.